A 378-amino-acid polypeptide reads, in one-letter code: tRNA-specific 2-thiouridylase MnmA (378 aa).

Residues 6–13 (AMSGGVDS) and Leu-32 contribute to the ATP site. Cys-101 functions as the Nucleophile in the catalytic mechanism. Cys-101 and Cys-199 are oxidised to a cystine. ATP is bound at residue Gly-125. The segment at 148–150 (KDQ) is interaction with tRNA. The active-site Cysteine persulfide intermediate is the Cys-199.

Belongs to the MnmA/TRMU family.

The protein localises to the cytoplasm. The catalysed reaction is S-sulfanyl-L-cysteinyl-[protein] + uridine(34) in tRNA + AH2 + ATP = 2-thiouridine(34) in tRNA + L-cysteinyl-[protein] + A + AMP + diphosphate + H(+). Its function is as follows. Catalyzes the 2-thiolation of uridine at the wobble position (U34) of tRNA, leading to the formation of s(2)U34. This Micrococcus luteus (strain ATCC 4698 / DSM 20030 / JCM 1464 / CCM 169 / CCUG 5858 / IAM 1056 / NBRC 3333 / NCIMB 9278 / NCTC 2665 / VKM Ac-2230) (Micrococcus lysodeikticus) protein is tRNA-specific 2-thiouridylase MnmA.